A 248-amino-acid chain; its full sequence is 2,3-bisphosphoglycerate-dependent phosphoglycerate mutase (248 aa).

Residues 8 to 15, 21 to 22, R60, 87 to 90, K98, 114 to 115, and 183 to 184 contribute to the substrate site; these read RHGESAWN, TG, EKHY, RR, and GN. H9 acts as the Tele-phosphohistidine intermediate in catalysis. The active-site Proton donor/acceptor is E87.

This sequence belongs to the phosphoglycerate mutase family. BPG-dependent PGAM subfamily.

The catalysed reaction is (2R)-2-phosphoglycerate = (2R)-3-phosphoglycerate. It participates in carbohydrate degradation; glycolysis; pyruvate from D-glyceraldehyde 3-phosphate: step 3/5. Functionally, catalyzes the interconversion of 2-phosphoglycerate and 3-phosphoglycerate. The protein is 2,3-bisphosphoglycerate-dependent phosphoglycerate mutase of Bacteroides fragilis (strain ATCC 25285 / DSM 2151 / CCUG 4856 / JCM 11019 / LMG 10263 / NCTC 9343 / Onslow / VPI 2553 / EN-2).